The chain runs to 146 residues: Envelope protein OPG155 (146 aa).

The chain crosses the membrane as a helical; Signal-anchor for type III membrane protein span at residues 1–21 (MNSLSIFFIVVATAAVCLLFI). Residues 22–146 (QGYSIYENYG…VECQFLKSVL (125 aa)) are Intravirion-facing.

It belongs to the orthopoxvirus OPG155 protein family. As to quaternary structure, part of a stable entry-fusion complex (EFC) which is at least composed of proteins OPG143, OPG147, OPG155, OPG086, OPG094, OPG107, OPG104, and OPG099. Formation of the viral membrane is necessary for the assembly of the complex. Interacts directly with protein OPG107. Post-translationally, contains two intramolecular disulfide bonds. They are created by the viral disulfide bond formation pathway, a poxvirus-specific pathway that operates on the cytoplasmic side of the MV membranes.

It is found in the virion membrane. Functionally, envelope protein required for virus entry into host cell and for cell-cell fusion (syncytium formation). The protein is Envelope protein OPG155 (OPG155) of Variola virus (isolate Human/India/Ind3/1967) (VARV).